The primary structure comprises 596 residues: MSTFNFASMAAQLGQEQGISFENKVLSWNTAADVQDVVDALNKQTTVHYLNLDGNTLGVEAAKAIGEGLKRHPEFRKALWKNMFTGRLISEIPEALKHLGAALIVAGAKLTVLDLSDNALGPNGMRGLEELLRSPVCYSLQELLLCNCGLGPEGGSMLSRALIDLHANANKAGFPLQLRVFIGSRNRLEDAGATEMATAFQTLKTFEEIVLEQNSIYIEGVEALAESFKHNPHLRVLNMNDNTLKSEGAEKIAEALPFLPLLREMSFGDCLIKTNGAYHFGEALERGNERLEVIDLGFNEINSDGGLVLVNAMGNKPKLRILNLDGNSFGEEGSEKIISEMSKLPTAAALQPFQHQEEEDLEDEYQADKQDADYEEEEEVHEHANDTTEEADEDSEGDEDDEEDEGDEEYSNVAEETAYVTTNAYTTKLFNDTTNSMASETFAVANKTISQKCTPEKFCLSQKPCSQEDFDSLDMDNKLEALQSIVNQFTGDNHLLLLVFTTLKCAHLSQSSKAALDLAVSLYQATFDYAIKTKQETRVLNYVLMQLRLLPCKEVFHSDYDVKNCRFALREALKQPTFANDNIKNSFKTFLEGAES.

LRR repeat units lie at residues Gln-44–Arg-71, Gly-107–Ser-134, Cys-137–Asp-164, Leu-203–His-230, Asn-231–Phe-258, and Leu-259–Arg-286. Residues His-355–Ala-418 form a disordered region. The segment covering Thr-387 to Tyr-410 has biased composition (acidic residues). A phosphothreonine mark is found at Thr-433 and Thr-434. Phosphoserine is present on Ser-436.

It belongs to the RNA1 family. Forms a complex with Nup358/RanBP2, sbr/Nxf1 and Nxt1. Associates with the nuclear pore complex via its interaction with Nup358/RanBP2. Both full-length and truncated protein are expressed in testis (at protein level). Expressed in oocytes and nurse cells (at protein level).

The protein resides in the cytoplasm. It localises to the nucleus membrane. Its function is as follows. GTPase activator for the nuclear Ras-related regulatory protein Ran, converting it to the putatively inactive GDP-bound state. Trans-acting factor necessary for meiotic distortion. Distortion is only seen in individuals that carry the RanGAP tandem duplication and express a RanGAP truncated protein. Binding of truncated RanGAP product to the Responder(RSP) locus initiates events that lead to sperm dysfunction. During oogenesis, plays a role in the biogenesis of annulate lamellae containing nuclear pore complex components. This is Ran GTPase-activating protein (RanGAP) from Drosophila melanogaster (Fruit fly).